A 72-amino-acid polypeptide reads, in one-letter code: SRY-related protein ADW4 (72 aa).

Positions 1–69 (VKRPMNAFMV…KHMADYPNYK (69 aa)) form a DNA-binding region, HMG box.

The protein resides in the nucleus. The polypeptide is SRY-related protein ADW4 (Alligator mississippiensis (American alligator)).